The chain runs to 252 residues: Carbohydrate deacetylase (252 aa).

Mg(2+)-binding residues include histidine 59 and histidine 122.

Belongs to the YdjC deacetylase family. In terms of assembly, homodimer. Mg(2+) is required as a cofactor.

Functionally, probably catalyzes the deacetylation of acetylated carbohydrates an important step in the degradation of oligosaccharides. The sequence is that of Carbohydrate deacetylase from Vibrio vulnificus (strain CMCP6).